Here is a 128-residue protein sequence, read N- to C-terminus: L-ectoine synthase (128 aa).

It belongs to the ectoine synthase family.

The enzyme catalyses (2S)-4-acetamido-2-aminobutanoate = L-ectoine + H2O. It functions in the pathway amine and polyamine biosynthesis; ectoine biosynthesis; L-ectoine from L-aspartate 4-semialdehyde: step 3/3. Catalyzes the circularization of gamma-N-acetyl-alpha,gamma-diaminobutyric acid (ADABA) to ectoine (1,4,5,6-tetrahydro-2-methyl-4-pyrimidine carboxylic acid), which is an excellent osmoprotectant. This Aliivibrio fischeri (strain MJ11) (Vibrio fischeri) protein is L-ectoine synthase.